A 203-amino-acid chain; its full sequence is Proteasome subunit beta 2 (203 aa).

Residues 1-9 constitute a propeptide, removed in mature form; by autocatalysis; sequence MGEEFQVGA. The active-site Nucleophile is Thr10.

The protein belongs to the peptidase T1B family. The 20S proteasome core is composed of 14 alpha and 14 beta subunits that assemble into four stacked heptameric rings, resulting in a barrel-shaped structure. The two inner rings, each composed of seven catalytic beta subunits, are sandwiched by two outer rings, each composed of seven alpha subunits. The catalytic chamber with the active sites is on the inside of the barrel. Has a gated structure, the ends of the cylinder being occluded by the N-termini of the alpha-subunits. Is capped at one or both ends by the proteasome regulatory ATPase, PAN.

Its subcellular location is the cytoplasm. The catalysed reaction is Cleavage of peptide bonds with very broad specificity.. With respect to regulation, the formation of the proteasomal ATPase PAN-20S proteasome complex, via the docking of the C-termini of PAN into the intersubunit pockets in the alpha-rings, triggers opening of the gate for substrate entry. Interconversion between the open-gate and close-gate conformations leads to a dynamic regulation of the 20S proteasome proteolysis activity. Component of the proteasome core, a large protease complex with broad specificity involved in protein degradation. This is Proteasome subunit beta 2 from Pyrobaculum neutrophilum (strain DSM 2338 / JCM 9278 / NBRC 100436 / V24Sta) (Thermoproteus neutrophilus).